A 419-amino-acid polypeptide reads, in one-letter code: Transcription termination factor Rho (419 aa).

Residues 48-123 enclose the Rho RNA-BD domain; sequence EISGDGVLEI…LKVDTINFDR (76 aa). RNA-binding regions lie at residues 61–66, 78–80, and 108–110; these read GFGFLR, DIY, and ERY. Residues 169-174, 181-186, and Arg212 each bind ATP; these read GKGQRG and KAGKTI. Positions 284–288 are RNA-binding 2; the sequence is VLTGG.

The protein belongs to the Rho family. As to quaternary structure, homohexamer. The homohexamer assembles into an open ring structure.

Functionally, facilitates transcription termination by a mechanism that involves Rho binding to the nascent RNA, activation of Rho's RNA-dependent ATPase activity, and release of the mRNA from the DNA template. The sequence is that of Transcription termination factor Rho from Pseudomonas fluorescens biotype C.